A 496-amino-acid polypeptide reads, in one-letter code: Steroid 21-hydroxylase (496 aa).

Serine 109 contacts heme b. Arginine 232 is a binding site for 17alpha-hydroxyprogesterone. Arginine 232 contributes to the progesterone binding site. Residues histidine 364, arginine 425, and cysteine 427 each contribute to the heme b site.

Belongs to the cytochrome P450 family. It depends on heme b as a cofactor.

The protein resides in the endoplasmic reticulum membrane. The protein localises to the microsome membrane. The catalysed reaction is progesterone + reduced [NADPH--hemoprotein reductase] + O2 = 21-hydroxyprogesterone + oxidized [NADPH--hemoprotein reductase] + H2O + H(+). The enzyme catalyses 17alpha-hydroxyprogesterone + reduced [NADPH--hemoprotein reductase] + O2 = 11-deoxycortisol + oxidized [NADPH--hemoprotein reductase] + H2O + H(+). In terms of biological role, a cytochrome P450 monooxygenase that plays a major role in adrenal steroidogenesis. Catalyzes the hydroxylation at C-21 of progesterone and 17alpha-hydroxyprogesterone to respectively form 11-deoxycorticosterone and 11-deoxycortisol, intermediate metabolites in the biosynthetic pathway of mineralocorticoids and glucocorticoids. Mechanistically, uses molecular oxygen inserting one oxygen atom into a substrate, and reducing the second into a water molecule, with two electrons provided by NADPH via cytochrome P450 reductase (CPR; NADPH-ferrihemoprotein reductase). The protein is Steroid 21-hydroxylase (CYP21) of Bos taurus (Bovine).